Reading from the N-terminus, the 138-residue chain is Large ribosomal subunit protein uL16 (138 aa).

The segment covering 1–15 (MLSPKKVKYRKKQRG) has biased composition (basic residues). The tract at residues 1 to 21 (MLSPKKVKYRKKQRGRLSGEA) is disordered.

Belongs to the universal ribosomal protein uL16 family. As to quaternary structure, part of the 50S ribosomal subunit.

Functionally, binds 23S rRNA and is also seen to make contacts with the A and possibly P site tRNAs. This chain is Large ribosomal subunit protein uL16, found in Borreliella burgdorferi (strain ATCC 35210 / DSM 4680 / CIP 102532 / B31) (Borrelia burgdorferi).